The sequence spans 63 residues: Large ribosomal subunit protein bL35 (63 aa).

This sequence belongs to the bacterial ribosomal protein bL35 family.

This is Large ribosomal subunit protein bL35 from Campylobacter concisus (strain 13826).